The primary structure comprises 599 residues: DNA primase (599 aa).

Residues 38–62 (CPFHQEKTPSFTVSDSKRFFYCFGC) form a CHC2-type zinc finger. Positions 250 to 332 (NYSILVEGYF…EKKISFIRLP (83 aa)) constitute a Toprim domain. The Mg(2+) site is built by Glu256, Asp300, and Asp302.

This sequence belongs to the DnaG primase family. Monomer. Interacts with DnaB. The cofactor is Zn(2+). Mg(2+) is required as a cofactor.

It catalyses the reaction ssDNA + n NTP = ssDNA/pppN(pN)n-1 hybrid + (n-1) diphosphate.. Its function is as follows. RNA polymerase that catalyzes the synthesis of short RNA molecules used as primers for DNA polymerase during DNA replication. The chain is DNA primase from Rickettsia bellii (strain RML369-C).